The sequence spans 469 residues: Neuraminidase (469 aa).

Topologically, residues 1 to 6 are intravirion; it reads MNPNQK. The helical transmembrane segment at 7-29 threads the bilayer; sequence IITIGSVSLTIATICFLMQIAIQ. The involved in apical transport and lipid raft association stretch occupies residues 11–33; the sequence is GSVSLTIATICFLMQIAIQVTTV. At 30–469 the chain is on the virion surface side; the sequence is VTTVTLHFKQ…DGADINLMPI (440 aa). Residues 36–88 are hypervariable stalk region; that stretch reads HFKQYECDSPANNQVMPCEPIIIERNITEIVYLTNTTIEKEICPKLVEYRNWS. N61, N70, and N86 each carry an N-linked (GlcNAc...) asparagine; by host glycan. Positions 91–469 are head of neuraminidase; it reads QCKITGFAPF…DGADINLMPI (379 aa). 8 disulfide bridges follow: C92-C417, C124-C129, C183-C230, C232-C237, C278-C291, C280-C289, C318-C337, and C421-C447. A substrate-binding site is contributed by R118. N146 is a glycosylation site (N-linked (GlcNAc...) asparagine; by host). The Proton donor/acceptor role is filled by D151. A substrate-binding site is contributed by R152. N-linked (GlcNAc...) asparagine; by host glycans are attached at residues N200 and N234. 276-277 serves as a coordination point for substrate; it reads EE. R292 lines the substrate pocket. Positions 293, 297, and 324 each coordinate Ca(2+). A substrate-binding site is contributed by R371. The N-linked (GlcNAc...) asparagine; by host glycan is linked to N402. Y406 acts as the Nucleophile in catalysis.

The protein belongs to the glycosyl hydrolase 34 family. As to quaternary structure, homotetramer. The cofactor is Ca(2+). In terms of processing, N-glycosylated.

Its subcellular location is the virion membrane. It localises to the host apical cell membrane. It catalyses the reaction Hydrolysis of alpha-(2-&gt;3)-, alpha-(2-&gt;6)-, alpha-(2-&gt;8)- glycosidic linkages of terminal sialic acid residues in oligosaccharides, glycoproteins, glycolipids, colominic acid and synthetic substrates.. With respect to regulation, inhibited by the neuraminidase inhibitors zanamivir (Relenza) and oseltamivir (Tamiflu). These drugs interfere with the release of progeny virus from infected cells and are effective against all influenza strains. Resistance to neuraminidase inhibitors is quite rare. Catalyzes the removal of terminal sialic acid residues from viral and cellular glycoconjugates. Cleaves off the terminal sialic acids on the glycosylated HA during virus budding to facilitate virus release. Additionally helps virus spread through the circulation by further removing sialic acids from the cell surface. These cleavages prevent self-aggregation and ensure the efficient spread of the progeny virus from cell to cell. Otherwise, infection would be limited to one round of replication. Described as a receptor-destroying enzyme because it cleaves a terminal sialic acid from the cellular receptors. May facilitate viral invasion of the upper airways by cleaving the sialic acid moieties on the mucin of the airway epithelial cells. Likely to plays a role in the budding process through its association with lipid rafts during intracellular transport. May additionally display a raft-association independent effect on budding. Plays a role in the determination of host range restriction on replication and virulence. Sialidase activity in late endosome/lysosome traffic seems to enhance virus replication. This chain is Neuraminidase, found in Aves (whales).